The primary structure comprises 543 residues: Protein DETOXIFICATION 47, chloroplastic (543 aa).

The transit peptide at 1 to 30 (MLIKSQRLTLFSPLLSKTRRIPVNSHQTLV) directs the protein to the chloroplast. A coiled-coil region spans residues 55–94 (VIRRRIKLERVTRNCVRIDREIDEEEEEEEKERGDLVKQS). A run of 12 helical transmembrane segments spans residues 107–127 (GPAM…TVVI), 135–155 (LAAL…FMFL), 181–201 (VLLF…RLFG), 228–248 (GLAW…LGMK), 256–276 (ALAA…LFLG), 278–298 (GIAG…YMMM), 319–339 (LWKI…KIAF), 342–362 (FIIY…QVMA), 406–426 (IIGA…PGLF), 443–463 (LLIP…LEGT), 472–492 (FVSS…MFVT), and 497–517 (GLLG…GLYL).

Belongs to the multi antimicrobial extrusion (MATE) (TC 2.A.66.1) family. Preferentially expressed in the epidermal cells.

Its subcellular location is the plastid. It is found in the chloroplast membrane. Functions as a multidrug and toxin extrusion transporter in the export of salicylic acid (SA) from the chloroplast to the cytoplasm. Plays an essential function in plant defense via the pathogen-induced salicylic acid (SA) accumulation. Also acts as a key component of the Age-related resistance (ARR) pathway. This Arabidopsis thaliana (Mouse-ear cress) protein is Protein DETOXIFICATION 47, chloroplastic.